The following is a 386-amino-acid chain: Bifunctional desaturase/conjugase FADX (386 aa).

Positions 1-28 are disordered; it reads MGAGGRMSVAPNNSKCEKKESRSVKRVP. 2 helical membrane passes run 65 to 85 and 87 to 107; these read LSFI…SPIT and IAWP…WVLG. The Histidine box-1 motif lies at 108 to 112; the sequence is HECGH. The short motif at 144–148 is the Histidine box-2 element; that stretch reads HRRHH. 3 helical membrane passes run 182–202, 228–248, and 250–270; these read ALTL…FNVS, IYIS…IAMA, and GLAW…ALVV. The Histidine box-3 motif lies at 318-322; it reads HVIHH.

Belongs to the fatty acid desaturase type 1 family. As to expression, expressed exclusively in developing seeds.

Its subcellular location is the endoplasmic reticulum membrane. It carries out the reaction a (9Z,12Z)-octadecadienoyl-containing glycerolipid + 2 Fe(II)-[cytochrome b5] + O2 + 2 H(+) = a (9Z,11E,13E)-octadecatrienoyl-containing glycerolipid + 2 Fe(III)-[cytochrome b5] + 2 H2O. The catalysed reaction is (9Z,12Z,15Z)-octadecatrienoyl-containing glycerolipid + 2 Fe(II)-[cytochrome b5] + O2 + 2 H(+) = a (9Z,11E,13E,15Z)-octadecatetraenoyl-containing glycerolipid + 2 Fe(III)-[cytochrome b5] + 2 H2O. The enzyme catalyses a (9Z)-octadecenoyl-containing glycerolipid + 2 Fe(II)-[cytochrome b5] + O2 + 2 H(+) = a (9Z,12E)-octadecadienoyl-containing glycerolipid + 2 Fe(III)-[cytochrome b5] + 2 H2O. It catalyses the reaction a (9Z)-hexadecenoyl-containing glycerolipid + 2 Fe(II)-[cytochrome b5] + O2 + 2 H(+) = a (9Z,12E)-hexadecadienoyl-containing glycerolipid + 2 Fe(III)-[cytochrome b5] + 2 H2O. It participates in lipid metabolism; polyunsaturated fatty acid biosynthesis. Converts linoleic acid to alpha-eleostearic acid (18:3(9Z,11E,13E)) and alpha-linolenic acid to alpha-parinaric acid (18:4(9Z,11E,13E,15Z)). Converts a single cis double bond at carbon 12 to two conjugated trans bonds at positions 11 and 13. Can also act as a 12(E) desaturase when acting on the monounsaturated fatty acids oleate and palmitoleate, stereoselectively introducing a trans double bond. The sequence is that of Bifunctional desaturase/conjugase FADX from Vernicia fordii (Tung).